The primary structure comprises 270 residues: NAD kinase (270 aa).

The Proton acceptor role is filled by D61. NAD(+) is bound by residues 61–62 (DG), 133–134 (NE), R144, R163, D165, and 176–181 (TAYNLS).

The protein belongs to the NAD kinase family. The cofactor is a divalent metal cation.

The protein resides in the cytoplasm. The enzyme catalyses NAD(+) + ATP = ADP + NADP(+) + H(+). Its function is as follows. Involved in the regulation of the intracellular balance of NAD and NADP, and is a key enzyme in the biosynthesis of NADP. Catalyzes specifically the phosphorylation on 2'-hydroxyl of the adenosine moiety of NAD to yield NADP. In Natronomonas pharaonis (strain ATCC 35678 / DSM 2160 / CIP 103997 / JCM 8858 / NBRC 14720 / NCIMB 2260 / Gabara) (Halobacterium pharaonis), this protein is NAD kinase.